A 647-amino-acid chain; its full sequence is A-type voltage-gated potassium channel KCND1 (647 aa).

The Cytoplasmic portion of the chain corresponds to 1–183 (MAAGLATWLP…RAFENPHTST (183 aa)). Residues 2-20 (AAGLATWLPFARAAAVGWL) form an interaction with KCNIP1, KCNIP2, and other family members region. Positions 104, 131, and 132 each coordinate Zn(2+). A disordered region spans residues 144-163 (AERLAEDEEAEQAGDGPALP). A helical membrane pass occupies residues 184 to 205 (AALVFYYVTGFFIAVSVIANVV). At 206-230 (ETIPCRGSARRSSREQPCGERFPQA) the chain is on the extracellular side. The chain crosses the membrane as a helical span at residues 231 to 252 (FFCMDTACVLIFTGEYLLRLFA). Topologically, residues 253-263 (APSRCRFLRSV) are cytoplasmic. Residues 264–284 (MSLIDVVAILPYYIGLLVPKN) traverse the membrane as a helical segment. The Extracellular segment spans residues 285-287 (DDV). The helical; Voltage-sensor transmembrane segment at 288–308 (SGAFVTLRVFRVFRIFKFSRH) threads the bilayer. Residues 309–323 (SQGLRILGYTLKSCA) lie on the Cytoplasmic side of the membrane. Positions 310–323 (QGLRILGYTLKSCA) are S4-S5 linker. Residues 324 to 345 (SELGFLLFSLTMAIIIFATVMF) traverse the membrane as a helical segment. Over 346–359 (YAEKGTNKTNFTSI) the chain is Extracellular. 2 N-linked (GlcNAc...) asparagine glycosylation sites follow: Asn352 and Asn355. The helical intramembrane region spans 360–371 (PAAFWYTIVTMT). The short motif at 372-377 (TLGYGD) is the Selectivity filter element. Residues 372-379 (TLGYGDMV) lie within the membrane without spanning it. Residues 380–386 (PSTIAGK) are Extracellular-facing. The chain crosses the membrane as a helical span at residues 387-415 (IFGSICSLSGVLVIALPVPVIVSNFSRIY). Residues 416-647 (HQNQRADKRR…FPETVKISSL (232 aa)) are Cytoplasmic-facing. Phosphoserine is present on Ser458. Positions 474–489 (FEQQHHHLLHCLEKTT) are required for dendritic targeting. Residues 506–524 (VSPGGRTSRSTSVSSQPVG) are compositionally biased toward low complexity. The segment at 506-531 (VSPGGRTSRSTSVSSQPVGPGSLLSS) is disordered. The residue at position 555 (Ser555) is a Phosphoserine. The segment at 601–634 (IPTPPANTPDESQPSSPGGGGRAGSTLRNSSLGT) is disordered.

Belongs to the potassium channel family. D (Shal) (TC 1.A.1.2) subfamily. Kv4.1/KCND1 sub-subfamily. As to quaternary structure, component of heteromultimeric potassium channels. Identified in potassium channel complexes containing KCND1, KCND2, KCND3, KCNIP1, KCNIP2, KCNIP3, KCNIP4, DPP6 and DPP10. As to expression, widely expressed. Highly expressed in brain, in particular in cerebellum and thalamus; detected at lower levels in the other parts of the brain.

It localises to the cell membrane. The catalysed reaction is K(+)(in) = K(+)(out). In terms of biological role, A-type voltage-gated potassium channel that mediates transmembrane potassium transport in excitable membranes in the brain. Mediates A-type current I(SA) in suprachiasmatic nucleus (SCN) neurons. Exhibits a low-threshold A-type current with a hyperpolarized steady-state inactivation midpoint and the recovery process was steeply voltage-dependent, with recovery being markedly faster at more negative potentials. May regulates repetitive firing rates in the suprachiasmatic nucleus (SCN) neurons and circadian rhythms in neuronal excitability and behavior. Contributes to the regulation of the circadian rhythm of action potential firing in suprachiasmatic nucleus neurons, which regulates the circadian rhythm of locomotor activity. The regulatory subunit KCNIP1 modulates the kinetics of channel inactivation, increases the current amplitudes and accelerates recovery from inactivation, shifts activation in a depolarizing direction. The regulatory subunit DPP10 decreases the voltage sensitivity of the inactivation channel gating. The chain is A-type voltage-gated potassium channel KCND1 from Homo sapiens (Human).